Consider the following 347-residue polypeptide: Ryncolin-3 (347 aa).

An N-terminal signal peptide occupies residues 1–19 (MKPWAAFHLIFLVASSVEG). Residues 57–114 (GIPGVPGINGSEGLKGDPGPQGLPGETGFDGIPGVAGPKGDKGDQGDKGDKGDKGDKG) enclose the Collagen-like domain. The disordered stretch occupies residues 62–115 (PGINGSEGLKGDPGPQGLPGETGFDGIPGVAGPKGDKGDQGDKGDKGDKGDKGD). The segment covering 95–115 (KGDKGDQGDKGDKGDKGDKGD) has biased composition (basic and acidic residues). Positions 121-341 (DCPPTDVEVR…YADMKIRPQQ (221 aa)) constitute a Fibrinogen C-terminal domain. Intrachain disulfides connect Cys132–Cys160 and Cys284–Cys297.

This sequence belongs to the ficolin lectin family. Veficolin subfamily. In terms of processing, hydroxylated. In terms of tissue distribution, expressed by the venom duct.

The protein localises to the secreted. Functionally, initiates complement activation and/or interferes in platelet aggregation and/or blood coagulation. This Cerberus rynchops (Dog-faced water snake) protein is Ryncolin-3.